We begin with the raw amino-acid sequence, 1074 residues long: ADAMTS-like protein 4 (1074 aa).

Positions M1–D24 are cleaved as a signal peptide. Residues G48–E93 form the TSP type-1 1 domain. The disordered stretch occupies residues Q77 to L342. The segment covering R103 to R119 has biased composition (polar residues). A compositionally biased stretch (basic and acidic residues) spans L132–I152. Residues A206 to P226 show a composition bias toward polar residues. The span at G310–P323 shows a compositional bias: gly residues. N-linked (GlcNAc...) (complex) asparagine glycosylation occurs at N490. TSP type-1 domains are found at residues C723 to L782, C783 to T842, W845 to E909, R910 to A969, and C970 to S1026. N773 is a glycosylation site (N-linked (GlcNAc...) asparagine). The region spanning P1029–L1066 is the PLAC domain.

As to quaternary structure, interacts with CTSB. Interacts with FBN1. In terms of processing, N-glycosylated. Can be O-fucosylated by POFUT2 on a serine or a threonine residue found within the consensus sequence C1-X(2)-(S/T)-C2-G of the TSP type-1 repeat domains where C1 and C2 are the first and second cysteine residue of the repeat, respectively. Fucosylated repeats can then be further glycosylated by the addition of a beta-1,3-glucose residue by the glucosyltransferase, B3GALTL. Fucosylation mediates the efficient secretion of ADAMTS family members. Can also be C-glycosylated with one or two mannose molecules on tryptophan residues within the consensus sequence W-X-X-W of the TPRs. N- and C-glycosylations can also facilitate secretion. In terms of tissue distribution, expressed in colon, heart, leukocyte, liver, lung, skeletal muscle, spleen, testis and placenta. Weaker expression in bone marrow, brain tissue, kidney and pancreas. Expression studies in fetal tissues reveal strong expression in heart, kidney, liver, lung and skeletal muscle, but weaker expression in fetal brain and skin.

It localises to the secreted. Its subcellular location is the extracellular space. The protein localises to the extracellular matrix. In terms of biological role, positive regulation of apoptosis. May facilitate FBN1 microfibril biogenesis. The chain is ADAMTS-like protein 4 (ADAMTSL4) from Homo sapiens (Human).